Here is a 297-residue protein sequence, read N- to C-terminus: Protoheme IX farnesyltransferase (297 aa).

9 helical membrane passes run 23–43 (VTQL…PGMP), 49–69 (VFGT…NCLI), 93–113 (IQVL…LYHL), 117–137 (LTMW…TVIL), 144–164 (NIVI…AAVA), 171–191 (AWVL…ALAL), 215–235 (RLHI…PYAI), 238–258 (SGAL…WYAW), and 275–295 (FSIL…WVGL).

It belongs to the UbiA prenyltransferase family. Protoheme IX farnesyltransferase subfamily.

The protein localises to the cell inner membrane. It carries out the reaction heme b + (2E,6E)-farnesyl diphosphate + H2O = Fe(II)-heme o + diphosphate. Its pathway is porphyrin-containing compound metabolism; heme O biosynthesis; heme O from protoheme: step 1/1. Functionally, converts heme B (protoheme IX) to heme O by substitution of the vinyl group on carbon 2 of heme B porphyrin ring with a hydroxyethyl farnesyl side group. The protein is Protoheme IX farnesyltransferase of Bordetella pertussis (strain Tohama I / ATCC BAA-589 / NCTC 13251).